The primary structure comprises 143 residues: D-aminoacyl-tRNA deacylase (143 aa).

Residues 135-136 (GP) carry the Gly-cisPro motif, important for rejection of L-amino acids motif.

The protein belongs to the DTD family. Homodimer.

The protein localises to the cytoplasm. It catalyses the reaction glycyl-tRNA(Ala) + H2O = tRNA(Ala) + glycine + H(+). The enzyme catalyses a D-aminoacyl-tRNA + H2O = a tRNA + a D-alpha-amino acid + H(+). In terms of biological role, an aminoacyl-tRNA editing enzyme that deacylates mischarged D-aminoacyl-tRNAs. Also deacylates mischarged glycyl-tRNA(Ala), protecting cells against glycine mischarging by AlaRS. Acts via tRNA-based rather than protein-based catalysis; rejects L-amino acids rather than detecting D-amino acids in the active site. By recycling D-aminoacyl-tRNA to D-amino acids and free tRNA molecules, this enzyme counteracts the toxicity associated with the formation of D-aminoacyl-tRNA entities in vivo and helps enforce protein L-homochirality. The protein is D-aminoacyl-tRNA deacylase of Nocardia farcinica (strain IFM 10152).